A 151-amino-acid chain; its full sequence is Protein archease-like (151 aa).

Residues aspartate 20, aspartate 150, and isoleucine 151 each contribute to the Ca(2+) site.

It belongs to the archease family.

Component of the tRNA-splicing ligase complex required to facilitate the enzymatic turnover of catalytic subunit RtcB. The protein is Protein archease-like of Dictyostelium discoideum (Social amoeba).